The chain runs to 480 residues: Probable WRKY transcription factor 61 (480 aa).

Residues 30-108 (NQLMAKHNEP…RNYDDNEKSS (79 aa)) are disordered. Basic and acidic residues-rich tracts occupy residues 57–66 (REKVNEREEL) and 84–106 (NKEEKNKDVEEAEGDRNYDDNEK). A DNA-binding region (WRKY) is located at residues 185–251 (CETPTMNDGC…YEGTHNHPLP (67 aa)).

It is found in the nucleus. Functionally, transcription factor. Interacts specifically with the W box (5'-(T)TGAC[CT]-3'), a frequently occurring elicitor-responsive cis-acting element. The chain is Probable WRKY transcription factor 61 (WRKY61) from Arabidopsis thaliana (Mouse-ear cress).